A 33-amino-acid chain; its full sequence is Gastrin (33 aa).

Q1 carries the post-translational modification Pyrrolidone carboxylic acid. Residue F33 is modified to Phenylalanine amide.

It belongs to the gastrin/cholecystokinin family.

It localises to the secreted. Functionally, gastrin stimulates the stomach mucosa to produce and secrete hydrochloric acid and the pancreas to secrete its digestive enzymes. It also stimulates smooth muscle contraction and increases blood circulation and water secretion in the stomach and intestine. The chain is Gastrin (GAST) from Cavia porcellus (Guinea pig).